Consider the following 363-residue polypeptide: Beta-1,3-N-acetylglucosaminyltransferase lunatic fringe (363 aa).

At 1 to 8 (MLKSCGRK) the chain is on the cytoplasmic side. Residues 9–29 (LLLSLVGSMFTCLLVLMVEPP) traverse the membrane as a helical; Signal-anchor for type II membrane protein segment. Topologically, residues 30 to 363 (GRPGLARGEA…TPWCPSNVVY (334 aa)) are lumenal. Position 113 (Arg-113) interacts with substrate. Residue Asn-151 is glycosylated (N-linked (GlcNAc...) asparagine). 2 cysteine pairs are disulfide-bonded: Cys-152/Cys-163 and Cys-181/Cys-244. A substrate-binding site is contributed by Asp-185. Position 186 (Asp-186) interacts with Mn(2+). Asp-274 is a catalytic residue. Residue His-298 coordinates Mn(2+). An intrachain disulfide couples Cys-348 to Cys-357.

It belongs to the glycosyltransferase 31 family. Mn(2+) serves as cofactor. It depends on Co(2+) as a cofactor. In terms of processing, a soluble form may be derived from the membrane form by proteolytic processing.

It is found in the golgi apparatus membrane. It carries out the reaction 3-O-(alpha-L-fucosyl)-L-threonyl-[EGF-like domain protein] + UDP-N-acetyl-alpha-D-glucosamine = 3-O-(N-acetyl-beta-D-glucosaminyl-(1-&gt;3)-alpha-L-fucosyl)-L-threonyl-[EGF-like domain protein] + UDP + H(+). It catalyses the reaction 3-O-(alpha-L-fucosyl)-L-seryl-[EGF-like domain protein] + UDP-N-acetyl-alpha-D-glucosamine = 3-O-(N-acetyl-beta-D-glucosaminyl-(1-&gt;3)-alpha-L-fucosyl)-L-seryl-[EGF-like domain protein] + UDP + H(+). Functionally, glycosyltransferase that initiates the elongation of O-linked fucose residues attached to EGF-like repeats in the extracellular domain of Notch molecules. Essential mediator of somite segmentation and patterning. This Gallus gallus (Chicken) protein is Beta-1,3-N-acetylglucosaminyltransferase lunatic fringe (LFNG).